Here is a 392-residue protein sequence, read N- to C-terminus: Large ribosomal subunit protein uL3 (392 aa).

This sequence belongs to the universal ribosomal protein uL3 family. Component of the large ribosomal subunit (LSU). Mature N.crassa ribosomes consist of a small (40S) and a large (60S) subunit. The 40S small subunit contains 1 molecule of ribosomal RNA (18S rRNA) and at least 32 different proteins. The large 60S subunit contains 3 rRNA molecules (26S, 5.8S and 5S rRNA) and at least 42 different proteins.

It is found in the cytoplasm. In terms of biological role, component of the ribosome, a large ribonucleoprotein complex responsible for the synthesis of proteins in the cell. The small ribosomal subunit (SSU) binds messenger RNAs (mRNAs) and translates the encoded message by selecting cognate aminoacyl-transfer RNA (tRNA) molecules. The large subunit (LSU) contains the ribosomal catalytic site termed the peptidyl transferase center (PTC), which catalyzes the formation of peptide bonds, thereby polymerizing the amino acids delivered by tRNAs into a polypeptide chain. The nascent polypeptides leave the ribosome through a tunnel in the LSU and interact with protein factors that function in enzymatic processing, targeting, and the membrane insertion of nascent chains at the exit of the ribosomal tunnel. The polypeptide is Large ribosomal subunit protein uL3 (rpl-3) (Neurospora crassa (strain ATCC 24698 / 74-OR23-1A / CBS 708.71 / DSM 1257 / FGSC 987)).